The sequence spans 314 residues: Leucotoxin LukE (314 aa).

Positions 1 to 28 (MFKKKMLAASLSVGLIAPLASPIQESRA) are cleaved as a signal peptide.

The protein belongs to the aerolysin family. As to quaternary structure, toxicity requires sequential binding and synergistic association of a class S and a class F component which form heterooligomeric complexes. LukE (class S) associates with LukD (class F). LukE can also associate with HlgB.

It localises to the secreted. Its function is as follows. Part of a bi-component leucotoxin that acts by forming pores in the membrane of the target cells. LukE-LukD is as effective as the Panton-Valentine leucocidin (PVL) for inducing dermonecrosis when injected in the rabbit skin, but not hemolytic and poorly leucotoxic on human blood cells compared to other leucotoxins expressed by S.aureus. This is Leucotoxin LukE (lukE) from Staphylococcus aureus.